A 293-amino-acid chain; its full sequence is MQSVVFPNKILPYLLVAPQIILTVIFFFWPASQALYQSTMREDAFGLSSNFVGLANFSAVLSDESYLNSLKVTVIFSVLTALVSMGLALLLATAADRVVRGKGFYRTMMIMPYAVAPAVAGMLWLFMFNPAMGTLSYILRRNGIMWDPLLDGNQAMLLVVAAAAWKQISYNFLFFVAGLQAIPKSLLEAASIDGARGSRRFWTIVFPLLAPTTFFLLVVNTVYAFFDTFGIIHAVTGGGPAKATETLVYKVYNDGFVNLNLGSSAAQSVILMVIVIALTAFQFRFVEKRVHYG.

6 consecutive transmembrane segments (helical) span residues 10-30 (ILPY…FFWP), 72-92 (VTVI…LLLA), 108-128 (MMIM…LFMF), 156-176 (MLLV…LFFV), 204-224 (IVFP…TVYA), and 261-281 (LGSS…LTAF). The region spanning 66–282 (YLNSLKVTVI…VIVIALTAFQ (217 aa)) is the ABC transmembrane type-1 domain.

This sequence belongs to the binding-protein-dependent transport system permease family. As to quaternary structure, the complex is composed of two ATP-binding proteins (UgpC), two transmembrane proteins (UgpA and UgpE) and a solute-binding protein (UgpB).

Its subcellular location is the cell inner membrane. In terms of biological role, part of the ABC transporter complex UgpBAEC involved in sn-glycerol-3-phosphate (G3P) import. Probably responsible for the translocation of the substrate across the membrane. The polypeptide is sn-glycerol-3-phosphate transport system permease protein UgpA (ugpA) (Agrobacterium fabrum (strain C58 / ATCC 33970) (Agrobacterium tumefaciens (strain C58))).